The primary structure comprises 88 residues: Co-chaperonin GroES (88 aa).

This sequence belongs to the GroES chaperonin family. As to quaternary structure, heptamer of 7 subunits arranged in a ring. Interacts with the chaperonin GroEL.

The protein resides in the cytoplasm. In terms of biological role, together with the chaperonin GroEL, plays an essential role in assisting protein folding. The GroEL-GroES system forms a nano-cage that allows encapsulation of the non-native substrate proteins and provides a physical environment optimized to promote and accelerate protein folding. GroES binds to the apical surface of the GroEL ring, thereby capping the opening of the GroEL channel. The sequence is that of Co-chaperonin GroES from Rubrobacter xylanophilus (strain DSM 9941 / JCM 11954 / NBRC 16129 / PRD-1).